A 282-amino-acid polypeptide reads, in one-letter code: Pantothenate synthetase (282 aa).

Residue 30-37 (MGFLHDGH) participates in ATP binding. The active-site Proton donor is the H37. Position 60 (Q60) interacts with (R)-pantoate. Residue Q60 coordinates beta-alanine. 146 to 149 (GQKD) contacts ATP. Q152 provides a ligand contact to (R)-pantoate. Residues I175 and 183–186 (KSSR) each bind ATP.

This sequence belongs to the pantothenate synthetase family. In terms of assembly, homodimer.

It is found in the cytoplasm. It carries out the reaction (R)-pantoate + beta-alanine + ATP = (R)-pantothenate + AMP + diphosphate + H(+). It participates in cofactor biosynthesis; (R)-pantothenate biosynthesis; (R)-pantothenate from (R)-pantoate and beta-alanine: step 1/1. Functionally, catalyzes the condensation of pantoate with beta-alanine in an ATP-dependent reaction via a pantoyl-adenylate intermediate. The protein is Pantothenate synthetase of Campylobacter jejuni (strain RM1221).